We begin with the raw amino-acid sequence, 31 residues long: Cyclotide vpub-A (31 aa).

Positions 1-31 (GVIPCGESCVFIPCISAVIGCSCKSKVCYRN) form a cross-link, cyclopeptide (Gly-Asn). Intrachain disulfides connect cysteine 5–cysteine 21, cysteine 9–cysteine 23, and cysteine 14–cysteine 28.

It belongs to the cyclotide family. Bracelet subfamily. This is a cyclic peptide.

Its function is as follows. Probably participates in a plant defense mechanism. The chain is Cyclotide vpub-A from Viola pubescens (Downy yellow violet).